The sequence spans 435 residues: Trigger factor (435 aa).

The 86-residue stretch at glycine 163 to proline 248 folds into the PPIase FKBP-type domain.

It belongs to the FKBP-type PPIase family. Tig subfamily.

The protein localises to the cytoplasm. It catalyses the reaction [protein]-peptidylproline (omega=180) = [protein]-peptidylproline (omega=0). Involved in protein export. Acts as a chaperone by maintaining the newly synthesized protein in an open conformation. Functions as a peptidyl-prolyl cis-trans isomerase. This Geobacter sp. (strain M21) protein is Trigger factor.